Consider the following 134-residue polypeptide: DNA-directed RNA polymerase subunit omega (134 aa).

Belongs to the RNA polymerase subunit omega family. In terms of assembly, the RNAP catalytic core consists of 2 alpha, 1 beta, 1 beta' and 1 omega subunit. When a sigma factor is associated with the core the holoenzyme is formed, which can initiate transcription.

It catalyses the reaction RNA(n) + a ribonucleoside 5'-triphosphate = RNA(n+1) + diphosphate. Promotes RNA polymerase assembly. Latches the N- and C-terminal regions of the beta' subunit thereby facilitating its interaction with the beta and alpha subunits. This Brucella anthropi (strain ATCC 49188 / DSM 6882 / CCUG 24695 / JCM 21032 / LMG 3331 / NBRC 15819 / NCTC 12168 / Alc 37) (Ochrobactrum anthropi) protein is DNA-directed RNA polymerase subunit omega.